Here is a 227-residue protein sequence, read N- to C-terminus: UPF0758 protein PG_0894 (227 aa).

The MPN domain occupies 104 to 227; that stretch reads SITDSRMAYR…YFSFADEGLL (124 aa). Positions 175, 177, and 188 each coordinate Zn(2+). The short motif at 175–188 is the JAMM motif element; it reads HNHPSGTVRPSEQD.

This sequence belongs to the UPF0758 family.

The polypeptide is UPF0758 protein PG_0894 (Porphyromonas gingivalis (strain ATCC BAA-308 / W83)).